Consider the following 132-residue polypeptide: Fatty acid-binding protein, adipocyte (132 aa).

The residue at position 2 (cysteine 2) is an N-acetylcysteine. A Phosphoserine modification is found at serine 13. Tyrosine 20 carries the post-translational modification Phosphotyrosine; by Tyr-kinases. Residues 22 to 32 carry the Nuclear localization signal motif; it reads KEVGVGFATRK. 127 to 129 lines the a fatty acid pocket; that stretch reads RVY.

This sequence belongs to the calycin superfamily. Fatty-acid binding protein (FABP) family. In terms of assembly, monomer. Homodimer. Interacts with PPARG.

It localises to the cytoplasm. The protein resides in the nucleus. Its function is as follows. Lipid transport protein in adipocytes. Binds both long chain fatty acids and retinoic acid. Delivers long-chain fatty acids and retinoic acid to their cognate receptors in the nucleus. FABPs are important elements related to the hibernating state in mammals. The protein is Fatty acid-binding protein, adipocyte (FABP4) of Ictidomys tridecemlineatus (Thirteen-lined ground squirrel).